The primary structure comprises 511 residues: 2-isopropylmalate synthase (511 aa).

Positions 5–267 (LIIFDTTLRD…DTDINATHIL (263 aa)) constitute a Pyruvate carboxyltransferase domain. Residues Asp-14, His-202, His-204, and Asn-238 each contribute to the Mn(2+) site. The segment at 392 to 511 (KLVSLKVCTE…ATNKAQHPQI (120 aa)) is regulatory domain.

It belongs to the alpha-IPM synthase/homocitrate synthase family. LeuA type 1 subfamily. As to quaternary structure, homodimer. Mn(2+) serves as cofactor.

It localises to the cytoplasm. It catalyses the reaction 3-methyl-2-oxobutanoate + acetyl-CoA + H2O = (2S)-2-isopropylmalate + CoA + H(+). It functions in the pathway amino-acid biosynthesis; L-leucine biosynthesis; L-leucine from 3-methyl-2-oxobutanoate: step 1/4. Its function is as follows. Catalyzes the condensation of the acetyl group of acetyl-CoA with 3-methyl-2-oxobutanoate (2-ketoisovalerate) to form 3-carboxy-3-hydroxy-4-methylpentanoate (2-isopropylmalate). This chain is 2-isopropylmalate synthase, found in Ruthia magnifica subsp. Calyptogena magnifica.